We begin with the raw amino-acid sequence, 406 residues long: Phloroisovalerophenone synthase (406 aa).

The active site involves Cys-171.

It belongs to the thiolase-like superfamily. Chalcone/stilbene synthases family.

It catalyses the reaction 3-methylbutanoyl-CoA + 3 malonyl-CoA + 3 H(+) = phlorisovalerophenone + 3 CO2 + 4 CoA. Its function is as follows. Produces 3-methyl-1-(2,4,6-trihydroxyphenyl)butan-1-one (phloroisovalerophenone). The protein is Phloroisovalerophenone synthase (VPS) of Psilotum nudum (Whisk fern).